The chain runs to 63 residues: Bucandin (63 aa).

5 disulfide bridges follow: Cys3–Cys24, Cys6–Cys11, Cys17–Cys39, Cys43–Cys55, and Cys56–Cys61.

Expressed by the venom gland.

It is found in the secreted. This toxin is described as enhancing presynaptic acetylcholine release, but neither experimental results, nor references to other sources are available. The chain is Bucandin from Bungarus candidus (Malayan krait).